The primary structure comprises 756 residues: 3-O-alpha-D-glucosyl-L-rhamnose phosphorylase (756 aa).

358–359 serves as a coordination point for substrate; sequence WD. The Proton donor role is filled by E486. 590 to 591 contributes to the substrate binding site; that stretch reads KQ.

The protein belongs to the glycosyl hydrolase 65 family. In terms of assembly, monomer.

It is found in the cytoplasm. The enzyme catalyses 3-O-alpha-D-glucosyl-L-rhamnose + phosphate = beta-D-glucose 1-phosphate + L-rhamnopyranose. In terms of biological role, phosphorylase showing strict alpha-1,3-regioselectivity and producing 3-O-alpha-D-glucopyranosyl-L-rhamnopyranose. Specific for L-rhamnose as acceptor and beta-D-glucose 1-phosphate as donor. Does not phosphorylate alpha,alpha-trehalose, kojibiose, nigerose, or maltose. The sequence is that of 3-O-alpha-D-glucosyl-L-rhamnose phosphorylase from Lachnoclostridium phytofermentans (strain ATCC 700394 / DSM 18823 / ISDg) (Clostridium phytofermentans).